The following is a 163-amino-acid chain: Large ribosomal subunit protein bL17 (163 aa).

Over residues 123-135 (AEASRATRASASK) the composition is skewed to low complexity. The segment at 123–163 (AEASRATRASASKKAAEEAETEEVVEAPAEETATEEAAEEK) is disordered. Positions 140–163 (EAETEEVVEAPAEETATEEAAEEK) are enriched in acidic residues.

It belongs to the bacterial ribosomal protein bL17 family. As to quaternary structure, part of the 50S ribosomal subunit. Contacts protein L32.

The chain is Large ribosomal subunit protein bL17 from Corynebacterium glutamicum (strain ATCC 13032 / DSM 20300 / JCM 1318 / BCRC 11384 / CCUG 27702 / LMG 3730 / NBRC 12168 / NCIMB 10025 / NRRL B-2784 / 534).